Consider the following 504-residue polypeptide: Maturase K (504 aa).

The protein belongs to the intron maturase 2 family. MatK subfamily.

It localises to the plastid. The protein localises to the chloroplast. In terms of biological role, usually encoded in the trnK tRNA gene intron. Probably assists in splicing its own and other chloroplast group II introns. The polypeptide is Maturase K (Thlaspi arvense (Field penny-cress)).